We begin with the raw amino-acid sequence, 159 residues long: Cathelicidin-5 (159 aa).

Positions 1–29 are cleaved as a signal peptide; it reads METQRASLSLGRWSLWLLLLGLALPSASA. The residue at position 30 (Gln30) is a Pyrrolidone carboxylic acid. Positions 30–131 are excised as a propeptide; sequence QALSYREAVL…DITCAVPQSV (102 aa). Disulfide bonds link Cys86-Cys97 and Cys108-Cys125.

It belongs to the cathelicidin family.

It localises to the secreted. Its function is as follows. Exerts a potent antimicrobial activity against Gram-negative and Gram-positive bacteria, including methicillin-resistant Staphylococcus aureus, and fungi. In Bos taurus (Bovine), this protein is Cathelicidin-5 (CATHL5).